Here is a 202-residue protein sequence, read N- to C-terminus: Ribonuclease HII (202 aa).

Residues 1–195 (MIVAGVDEVG…PELKGGSPAG (195 aa)) form the RNase H type-2 domain. The a divalent metal cation site is built by D7, E8, and D103.

This sequence belongs to the RNase HII family. Mn(2+) is required as a cofactor. Mg(2+) serves as cofactor.

The protein localises to the cytoplasm. It catalyses the reaction Endonucleolytic cleavage to 5'-phosphomonoester.. In terms of biological role, endonuclease that specifically degrades the RNA of RNA-DNA hybrids. In Synechococcus sp. (strain RCC307), this protein is Ribonuclease HII.